Consider the following 46-residue polypeptide: Cytochrome b559 subunit beta (46 aa).

Residues 21–37 form a helical membrane-spanning segment; it reads WLALHTLGIPTVFFLGA. Heme is bound at residue histidine 25.

The protein belongs to the PsbE/PsbF family. As to quaternary structure, heterodimer of an alpha subunit and a beta subunit. PSII is composed of 1 copy each of membrane proteins PsbA, PsbB, PsbC, PsbD, PsbE, PsbF, PsbH, PsbI, PsbJ, PsbK, PsbL, PsbM, PsbT, PsbX, PsbY, PsbZ, Psb30/Ycf12, peripheral proteins PsbO, CyanoQ (PsbQ), PsbU, PsbV and a large number of cofactors. It forms dimeric complexes. The cofactor is heme b.

It is found in the cellular thylakoid membrane. In terms of biological role, this b-type cytochrome is tightly associated with the reaction center of photosystem II (PSII). PSII is a light-driven water:plastoquinone oxidoreductase that uses light energy to abstract electrons from H(2)O, generating O(2) and a proton gradient subsequently used for ATP formation. It consists of a core antenna complex that captures photons, and an electron transfer chain that converts photonic excitation into a charge separation. The sequence is that of Cytochrome b559 subunit beta from Synechococcus sp. (strain CC9605).